A 153-amino-acid polypeptide reads, in one-letter code: Cytochrome c-type biogenesis protein CcmE (153 aa).

Over 1–8 the chain is Cytoplasmic; the sequence is MTTRRGRR. A helical; Signal-anchor for type II membrane protein membrane pass occupies residues 9–29; it reads ALLIAGGVGLLALAAALVLNA. Residues 30–153 lie on the Periplasmic side of the membrane; sequence LRSNLVFFFS…PSATLQTEAR (124 aa). H124 and Y128 together coordinate heme.

It belongs to the CcmE/CycJ family.

It localises to the cell inner membrane. Functionally, heme chaperone required for the biogenesis of c-type cytochromes. Transiently binds heme delivered by CcmC and transfers the heme to apo-cytochromes in a process facilitated by CcmF and CcmH. The chain is Cytochrome c-type biogenesis protein CcmE from Bordetella parapertussis (strain 12822 / ATCC BAA-587 / NCTC 13253).